Here is a 62-residue protein sequence, read N- to C-terminus: Protein DsrB (62 aa).

This sequence belongs to the DsrB family.

This Shigella boydii serotype 18 (strain CDC 3083-94 / BS512) protein is Protein DsrB.